The following is a 291-amino-acid chain: 33 kDa chaperonin (291 aa).

Cystine bridges form between Cys237-Cys239 and Cys270-Cys273.

It belongs to the HSP33 family. In terms of processing, under oxidizing conditions two disulfide bonds are formed involving the reactive cysteines. Under reducing conditions zinc is bound to the reactive cysteines and the protein is inactive.

It is found in the cytoplasm. Functionally, redox regulated molecular chaperone. Protects both thermally unfolding and oxidatively damaged proteins from irreversible aggregation. Plays an important role in the bacterial defense system toward oxidative stress. This Bacillus cereus (strain G9842) protein is 33 kDa chaperonin.